We begin with the raw amino-acid sequence, 157 residues long: Probable succinate transporter subunit YjjB (157 aa).

The next 4 helical transmembrane spans lie at 8-28 (LALA…AMVF), 50-70 (MILM…SMLG), 87-107 (VFTV…TAMI), and 129-149 (FLTA…PGLW).

The protein belongs to the ThrE exporter (TC 2.A.79) family. The transporter is composed of YjjB and YjjP.

The protein localises to the cell inner membrane. Involved in succinate export with YjjP. Both proteins are required for export. In Escherichia coli O157:H7 (strain EC4115 / EHEC), this protein is Probable succinate transporter subunit YjjB.